The following is a 442-amino-acid chain: CBL-interacting serine/threonine-protein kinase 14 (442 aa).

A Protein kinase domain is found at Tyr22–Phe276. ATP contacts are provided by residues Val28 to Val36 and Lys51. Residue Asp144 is the Proton acceptor of the active site. The segment at Asp162–Glu191 is activation loop. A Phosphoserine modification is found at Ser166. The residue at position 180 (Thr180) is a Phosphothreonine. The region spanning Met305–Gly329 is the NAF domain. The PPI stretch occupies residues Asp335–Ala365.

This sequence belongs to the protein kinase superfamily. CAMK Ser/Thr protein kinase family. SNF1 subfamily. As to quaternary structure, interacts with CBL2. Interacts with CBL3. Interacts with CBL8. Interacts with CBL9. Interacts with KIN10 and KIN11. The cofactor is Mn(2+). In terms of tissue distribution, predominant in roots, cauline leaves, and flowers. Ubiquitous with highest expression in 7-day-old seedlings and flower buds, followed by that in cauline leaves and young siliques.

The protein resides in the cytoplasm. Its subcellular location is the nucleus. The catalysed reaction is L-seryl-[protein] + ATP = O-phospho-L-seryl-[protein] + ADP + H(+). It carries out the reaction L-threonyl-[protein] + ATP = O-phospho-L-threonyl-[protein] + ADP + H(+). CIPK serine-threonine protein kinases interact with CBL proteins. Binding of a CBL protein to the regulatory NAF domain of CIPK protein lead to the activation of the kinase in a calcium-dependent manner. In Arabidopsis thaliana (Mouse-ear cress), this protein is CBL-interacting serine/threonine-protein kinase 14 (CIPK14).